The sequence spans 599 residues: Elongation factor 4 (599 aa).

Residues 5–187 (SHIRNFSIIA…RLVQTIPAPT (183 aa)) enclose the tr-type G domain. Residues 17–22 (DHGKST) and 134–137 (NKMD) each bind GTP.

Belongs to the TRAFAC class translation factor GTPase superfamily. Classic translation factor GTPase family. LepA subfamily.

It localises to the cell inner membrane. It catalyses the reaction GTP + H2O = GDP + phosphate + H(+). Required for accurate and efficient protein synthesis under certain stress conditions. May act as a fidelity factor of the translation reaction, by catalyzing a one-codon backward translocation of tRNAs on improperly translocated ribosomes. Back-translocation proceeds from a post-translocation (POST) complex to a pre-translocation (PRE) complex, thus giving elongation factor G a second chance to translocate the tRNAs correctly. Binds to ribosomes in a GTP-dependent manner. The protein is Elongation factor 4 of Ectopseudomonas mendocina (strain ymp) (Pseudomonas mendocina).